The sequence spans 500 residues: Lysine--tRNA ligase (500 aa).

Residues Glu-410 and Glu-417 each contribute to the Mg(2+) site.

It belongs to the class-II aminoacyl-tRNA synthetase family. As to quaternary structure, homodimer. It depends on Mg(2+) as a cofactor.

It localises to the cytoplasm. The catalysed reaction is tRNA(Lys) + L-lysine + ATP = L-lysyl-tRNA(Lys) + AMP + diphosphate. This Pseudomonas entomophila (strain L48) protein is Lysine--tRNA ligase.